A 946-amino-acid polypeptide reads, in one-letter code: Aminopeptidase N (946 aa).

A signal peptide spans 1–15 (MRLLICLTLLGLVCG). Asn-60 carries N-linked (GlcNAc...) asparagine glycosylation. Residue 308–312 (GAMEN) coordinates substrate. Residue His-344 coordinates Zn(2+). Glu-345 serves as the catalytic Proton acceptor. Zn(2+) contacts are provided by His-348 and Glu-367. Asn-550 and Asn-605 each carry an N-linked (GlcNAc...) asparagine glycan. 2 disulfide bridges follow: Cys-715/Cys-722 and Cys-751/Cys-787.

The protein belongs to the peptidase M1 family. Zn(2+) is required as a cofactor.

It localises to the cell membrane. The enzyme catalyses Release of an N-terminal amino acid, Xaa-|-Yaa- from a peptide, amide or arylamide. Xaa is preferably Ala, but may be most amino acids including Pro (slow action). When a terminal hydrophobic residue is followed by a prolyl residue, the two may be released as an intact Xaa-Pro dipeptide.. This Plutella xylostella (Diamondback moth) protein is Aminopeptidase N (APN1).